A 362-amino-acid chain; its full sequence is N5-carboxyaminoimidazole ribonucleotide synthase (362 aa).

ATP-binding positions include Arg-108, Lys-148, 153-159 (GYDGKGQ), 185-188 (EGFV), Glu-193, His-216, and 270-271 (NE). Positions 112-300 (KQFLNESGIE…QFEQHIRAVA (189 aa)) constitute an ATP-grasp domain.

The protein belongs to the PurK/PurT family. In terms of assembly, homodimer.

It carries out the reaction 5-amino-1-(5-phospho-beta-D-ribosyl)imidazole + hydrogencarbonate + ATP = 5-carboxyamino-1-(5-phospho-D-ribosyl)imidazole + ADP + phosphate + 2 H(+). It functions in the pathway purine metabolism; IMP biosynthesis via de novo pathway; 5-amino-1-(5-phospho-D-ribosyl)imidazole-4-carboxylate from 5-amino-1-(5-phospho-D-ribosyl)imidazole (N5-CAIR route): step 1/2. Its function is as follows. Catalyzes the ATP-dependent conversion of 5-aminoimidazole ribonucleotide (AIR) and HCO(3)(-) to N5-carboxyaminoimidazole ribonucleotide (N5-CAIR). The sequence is that of N5-carboxyaminoimidazole ribonucleotide synthase from Brucella melitensis biotype 1 (strain ATCC 23456 / CCUG 17765 / NCTC 10094 / 16M).